A 405-amino-acid polypeptide reads, in one-letter code: Exodeoxyribonuclease 7 large subunit (405 aa).

Belongs to the XseA family. In terms of assembly, heterooligomer composed of large and small subunits.

It is found in the cytoplasm. It carries out the reaction Exonucleolytic cleavage in either 5'- to 3'- or 3'- to 5'-direction to yield nucleoside 5'-phosphates.. Its function is as follows. Bidirectionally degrades single-stranded DNA into large acid-insoluble oligonucleotides, which are then degraded further into small acid-soluble oligonucleotides. The chain is Exodeoxyribonuclease 7 large subunit from Halothermothrix orenii (strain H 168 / OCM 544 / DSM 9562).